A 499-amino-acid chain; its full sequence is Glucose-6-phosphate isomerase (499 aa).

The active-site Proton donor is glutamate 352. Active-site residues include histidine 383 and lysine 487.

It belongs to the GPI family.

It localises to the cytoplasm. The enzyme catalyses alpha-D-glucose 6-phosphate = beta-D-fructose 6-phosphate. It functions in the pathway carbohydrate biosynthesis; gluconeogenesis. It participates in carbohydrate degradation; glycolysis; D-glyceraldehyde 3-phosphate and glycerone phosphate from D-glucose: step 2/4. Functionally, catalyzes the reversible isomerization of glucose-6-phosphate to fructose-6-phosphate. This is Glucose-6-phosphate isomerase from Legionella pneumophila (strain Lens).